The primary structure comprises 162 residues: uncharacterized protein (162 aa).

The C2H2-type zinc-finger motif lies at 29 to 50 (CPFCDYTNADAKVVRKHVKSKH). The disordered stretch occupies residues 60–93 (KLESQKSKNNGKKQTGQKKQGKGKKQPKRVRETC). Basic residues predominate over residues 68-87 (NNGKKQTGQKKQGKGKKQPK).

This sequence to M.jannaschii MJECS06.

This is an uncharacterized protein from Methanocaldococcus jannaschii (strain ATCC 43067 / DSM 2661 / JAL-1 / JCM 10045 / NBRC 100440) (Methanococcus jannaschii).